The primary structure comprises 75 residues: Translation initiation factor IF-1 (75 aa).

The S1-like domain maps to 1–75 (MANLPKEQKL…SKGRIVYRFK (75 aa)).

The protein belongs to the IF-1 family. Component of the 30S ribosomal translation pre-initiation complex which assembles on the 30S ribosome in the order IF-2 and IF-3, IF-1 and N-formylmethionyl-tRNA(fMet); mRNA recruitment can occur at any time during PIC assembly.

The protein localises to the cytoplasm. Its function is as follows. One of the essential components for the initiation of protein synthesis. Stabilizes the binding of IF-2 and IF-3 on the 30S subunit to which N-formylmethionyl-tRNA(fMet) subsequently binds. Helps modulate mRNA selection, yielding the 30S pre-initiation complex (PIC). Upon addition of the 50S ribosomal subunit IF-1, IF-2 and IF-3 are released leaving the mature 70S translation initiation complex. This is Translation initiation factor IF-1 from Mesomycoplasma hyopneumoniae (strain 232) (Mycoplasma hyopneumoniae).